The primary structure comprises 509 residues: tRNA-2-methylthio-N(6)-dimethylallyladenosine synthase (509 aa).

Polar residues predominate over residues 1-13 (MNEQQRLASQQAN). The tract at residues 1–26 (MNEQQRLASQQANSSKKKEEKDYSKY) is disordered. Residues 16–25 (KKKEEKDYSK) are compositionally biased toward basic and acidic residues. In terms of domain architecture, MTTase N-terminal spans 66–184 (RKFYIRTYGC…LPYILKDAMF (119 aa)). 6 residues coordinate [4Fe-4S] cluster: Cys-75, Cys-111, Cys-145, Cys-221, Cys-225, and Cys-228. The 231-residue stretch at 207–437 (RRGDIKAWVN…NALVNKLAIE (231 aa)) folds into the Radical SAM core domain. A TRAM domain is found at 440-503 (NRYKGQIVEV…TWSLNGELVE (64 aa)).

This sequence belongs to the methylthiotransferase family. MiaB subfamily. In terms of assembly, monomer. [4Fe-4S] cluster serves as cofactor.

It is found in the cytoplasm. The catalysed reaction is N(6)-dimethylallyladenosine(37) in tRNA + (sulfur carrier)-SH + AH2 + 2 S-adenosyl-L-methionine = 2-methylsulfanyl-N(6)-dimethylallyladenosine(37) in tRNA + (sulfur carrier)-H + 5'-deoxyadenosine + L-methionine + A + S-adenosyl-L-homocysteine + 2 H(+). In terms of biological role, catalyzes the methylthiolation of N6-(dimethylallyl)adenosine (i(6)A), leading to the formation of 2-methylthio-N6-(dimethylallyl)adenosine (ms(2)i(6)A) at position 37 in tRNAs that read codons beginning with uridine. The sequence is that of tRNA-2-methylthio-N(6)-dimethylallyladenosine synthase from Bacillus cereus (strain ATCC 10987 / NRS 248).